Reading from the N-terminus, the 66-residue chain is Large ribosomal subunit protein bL35 (66 aa).

Residues 19 to 45 (SGKVVAAQSTKRHGMTKRSKRSLRTRR) form a disordered region. Basic residues predominate over residues 28 to 45 (TKRHGMTKRSKRSLRTRR).

It belongs to the bacterial ribosomal protein bL35 family.

This Anaplasma phagocytophilum (strain HZ) protein is Large ribosomal subunit protein bL35.